We begin with the raw amino-acid sequence, 172 residues long: SsrA-binding protein (172 aa).

The protein belongs to the SmpB family.

It localises to the cytoplasm. Its function is as follows. Required for rescue of stalled ribosomes mediated by trans-translation. Binds to transfer-messenger RNA (tmRNA), required for stable association of tmRNA with ribosomes. tmRNA and SmpB together mimic tRNA shape, replacing the anticodon stem-loop with SmpB. tmRNA is encoded by the ssrA gene; the 2 termini fold to resemble tRNA(Ala) and it encodes a 'tag peptide', a short internal open reading frame. During trans-translation Ala-aminoacylated tmRNA acts like a tRNA, entering the A-site of stalled ribosomes, displacing the stalled mRNA. The ribosome then switches to translate the ORF on the tmRNA; the nascent peptide is terminated with the 'tag peptide' encoded by the tmRNA and targeted for degradation. The ribosome is freed to recommence translation, which seems to be the essential function of trans-translation. This chain is SsrA-binding protein, found in Dehalococcoides mccartyi (strain CBDB1).